The following is a 182-amino-acid chain: Gremlin-1 (182 aa).

The first 24 residues, 1–24 (MNCLVYALGSLFLLSGLLLPSSEG), serve as a signal peptide directing secretion. The disordered stretch occupies residues 23–65 (EGKKKVSGSQGAIPPPDKGQPNDSEQGQAQPGDRVRGKGKGQA). Asn-44 carries N-linked (GlcNAc...) asparagine glycosylation. 4 disulfide bridges follow: Cys-92/Cys-142, Cys-106/Cys-156, Cys-116/Cys-174, and Cys-120/Cys-176. Positions 92–182 (CKTQPLKQTI…QCRCISIDLD (91 aa)) constitute a CTCK domain.

This sequence belongs to the DAN family.

The protein resides in the secreted. Its function is as follows. Cytokine that has an axial patterning activity. Acts like BMP antagonist in embryonic explants. Blocks the BMP2 activity. The sequence is that of Gremlin-1 (grem1) from Xenopus laevis (African clawed frog).